We begin with the raw amino-acid sequence, 129 residues long: Profilin-4 (129 aa).

Belongs to the profilin family.

It is found in the cytoplasm. Functionally, involved in male fertility. Required for manchette development and acrosome biogenesis during spermiogenesis. Binds in vitro to phospholipids, including phosphatidylinositol 3-phosphate (PtdIns(3)P), phosphatidylinositol 4,5-bisphosphate (PtdIns(4,5)P2), phosphatidylinositol 4-phosphate (PtdIns(4)P) and phosphatidic acid (PA). Contrary to other profilin family members, does not bind to actin in vitro. The protein is Profilin-4 (PFN4) of Bos taurus (Bovine).